A 60-amino-acid polypeptide reads, in one-letter code: Insect toxin mu-NPTX-Nc1a (60 aa).

An N-terminal signal peptide occupies residues 1-19; sequence MIYQVVLLLLVSPAPVSAA.

In terms of processing, contains 4 disulfide bonds. As to expression, expressed by the venom gland.

It localises to the secreted. Its function is as follows. Insect-specific toxin. Blocks voltage-gated potassium and sodium channels. The chain is Insect toxin mu-NPTX-Nc1a from Trichonephila clavata (Joro spider).